A 703-amino-acid chain; its full sequence is Polyribonucleotide nucleotidyltransferase (703 aa).

2 residues coordinate Mg(2+): Asp-482 and Asp-488. Residues 549-607 enclose the KH domain; sequence PKAQVMKIPEDKVGLVIGPAGKNIKYIKEQFGASVWIDGANAYINAPTIEAVNKAADFI. In terms of domain architecture, S1 motif spans 617-679; it reads GGVYEGKVIR…EQNRLNLCSP (63 aa). The segment at 677–703 is disordered; it reads CSPDYQKPENQERPRKEQLNRKPHHRK. Residues 682–696 are compositionally biased toward basic and acidic residues; sequence QKPENQERPRKEQLN.

This sequence belongs to the polyribonucleotide nucleotidyltransferase family. Mg(2+) is required as a cofactor.

Its subcellular location is the cytoplasm. It carries out the reaction RNA(n+1) + phosphate = RNA(n) + a ribonucleoside 5'-diphosphate. In terms of biological role, involved in mRNA degradation. Catalyzes the phosphorolysis of single-stranded polyribonucleotides processively in the 3'- to 5'-direction. This chain is Polyribonucleotide nucleotidyltransferase, found in Hydrogenobaculum sp. (strain Y04AAS1).